The primary structure comprises 505 residues: Bile acid-sensitive ion channel (505 aa).

Residues 1–30 form a binds the plasma membrane and stabilizes the channel in the closed state region; the sequence is MEQTEKSKVYAENGLLEKIKLCLSKKPLPS. Over 1-61 the chain is Cytoplasmic; the sequence is MEQTEKSKVY…NIVQNRSKIR (61 aa). The chain crosses the membrane as a helical span at residues 62 to 82; it reads RVLWLVVVLGSVSLVTWQIYI. Residues 83–459 lie on the Extracellular side of the membrane; sequence RLLNYFTWPT…GLFCGASLIT (377 aa). 6 disulfides stabilise this stretch: Cys-112–Cys-207, Cys-185–Cys-192, Cys-298–Cys-377, Cys-315–Cys-373, Cys-328–Cys-350, and Cys-330–Cys-342. N-linked (GlcNAc...) asparagine glycosylation is found at Asn-147, Asn-163, Asn-178, and Asn-179. Asn-306 carries an N-linked (GlcNAc...) asparagine glycan. N-linked (GlcNAc...) asparagine glycans are attached at residues Asn-370, Asn-405, and Asn-421. The short motif at 454 to 456 is the GAS motif; ion selectivity filter element; that stretch reads GAS. A helical membrane pass occupies residues 460-480; it reads IIEIIEYLFTNFYWICIFFLL. The Cytoplasmic segment spans residues 481–505; that stretch reads KISEMTQWTPPPQNHLGNKNRIEEC.

Belongs to the amiloride-sensitive sodium channel (TC 1.A.6) family. ASIC5 subfamily. As to quaternary structure, forms homotrimeric channels. Detected in small intestine, duodenum and jejunum. Detected at very low levels in testis and rectum.

The protein localises to the apical cell membrane. The protein resides in the cell membrane. It catalyses the reaction Na(+)(in) = Na(+)(out). The catalysed reaction is Li(+)(in) = Li(+)(out). It carries out the reaction K(+)(in) = K(+)(out). The enzyme catalyses H(+)(in) = H(+)(out). Its activity is regulated as follows. Inhibited by the diuretic drug amiloride. Its function is as follows. Forms bile acid-gated sodium channels and may play a role in bile acid-dependent absorption and secretion by epithelial cells of the bile ducts. Displays high selectivity for sodium ions but can also permit the permeation of other cations. The gating could be indirect and the consequence of alterations of the membrane environment of the channel by bile acids. As a sodium channel of type II unipolar brush cells of the vestibulocerebellum, controlling the electrical activity of these cells, could play a role in motor coordination and balance. This chain is Bile acid-sensitive ion channel, found in Homo sapiens (Human).